The sequence spans 277 residues: Putative hydro-lyase BP1875 (277 aa).

This sequence belongs to the D-glutamate cyclase family.

The polypeptide is Putative hydro-lyase BP1875 (Bordetella pertussis (strain Tohama I / ATCC BAA-589 / NCTC 13251)).